Here is an 868-residue protein sequence, read N- to C-terminus: Leucine--tRNA ligase (868 aa).

The 'HIGH' region motif lies at 42 to 52; it reads PYPSGKLHMGH. Positions 627 to 631 match the 'KMSKS' region motif; the sequence is KMSKS. Residue Lys630 participates in ATP binding.

It belongs to the class-I aminoacyl-tRNA synthetase family.

The protein resides in the cytoplasm. It catalyses the reaction tRNA(Leu) + L-leucine + ATP = L-leucyl-tRNA(Leu) + AMP + diphosphate. This Pseudomonas savastanoi pv. phaseolicola (strain 1448A / Race 6) (Pseudomonas syringae pv. phaseolicola (strain 1448A / Race 6)) protein is Leucine--tRNA ligase.